The chain runs to 751 residues: Semaphorin-3C (751 aa).

The signal sequence occupies residues 1–21 (MAFQAVCILVGVFVCSTYVKG). Residues 28-511 (RVYLTFDELR…SNEGLAQVSL (484 aa)) form the Sema domain. N-linked (GlcNAc...) asparagine glycosylation occurs at N81. C101 and C112 are disulfide-bonded. A glycan (N-linked (GlcNAc...) asparagine) is linked at N123. 3 disulfide bridges follow: C130–C139, C266–C378, and C290–C338. An N-linked (GlcNAc...) asparagine glycan is attached at N268. An N-linked (GlcNAc...) asparagine glycan is attached at N465. Cysteines 514 and 532 form a disulfide. Residues 571–655 (AYRNAAEIVQ…TENSFKQTIA (85 aa)) enclose the Ig-like C2-type domain. N-linked (GlcNAc...) asparagine glycans are attached at residues N585 and N586. A disulfide bond links C592 and C643. Positions 712-731 (TRQQHQQGEESQKMRGDYGK) are enriched in basic and acidic residues. The segment at 712–751 (TRQQHQQGEESQKMRGDYGKLKALINSRKSRNRRNQLPES) is disordered.

This sequence belongs to the semaphorin family. As to quaternary structure, interacts with PLXND1.

It is found in the secreted. Its function is as follows. Binds to plexin family members and plays an important role in the regulation of developmental processes. Required for normal cardiovascular development during embryogenesis. Functions as attractant for growing axons, and thereby plays an important role in axon growth and axon guidance. The polypeptide is Semaphorin-3C (SEMA3C) (Bos taurus (Bovine)).